Here is an 89-residue protein sequence, read N- to C-terminus: Small ribosomal subunit protein uS15 (89 aa).

Belongs to the universal ribosomal protein uS15 family. As to quaternary structure, part of the 30S ribosomal subunit. Forms a bridge to the 50S subunit in the 70S ribosome, contacting the 23S rRNA.

Functionally, one of the primary rRNA binding proteins, it binds directly to 16S rRNA where it helps nucleate assembly of the platform of the 30S subunit by binding and bridging several RNA helices of the 16S rRNA. Its function is as follows. Forms an intersubunit bridge (bridge B4) with the 23S rRNA of the 50S subunit in the ribosome. The chain is Small ribosomal subunit protein uS15 from Solibacter usitatus (strain Ellin6076).